We begin with the raw amino-acid sequence, 337 residues long: 4-hydroxyproline 2-epimerase 2 (337 aa).

Cys90 serves as the catalytic Proton acceptor. Substrate contacts are provided by residues 91 to 92, His223, and Asp249; that span reads GH. The Proton donor role is filled by Cys253. 254–255 provides a ligand contact to substrate; the sequence is GT.

The protein belongs to the proline racemase family.

It carries out the reaction trans-4-hydroxy-L-proline = cis-4-hydroxy-D-proline. Its function is as follows. Catalyzes the epimerization of trans-4-hydroxy-L-proline (t4LHyp) to cis-4-hydroxy-D-proline (c4DHyp). Is likely involved in a degradation pathway that converts t4LHyp to alpha-ketoglutarate. Can also catalyze the epimerization of trans-3-hydroxy-L-proline (t3LHyp) to cis-3-hydroxy-D-proline (c3DHyp), albeit with 170-fold lower efficiency. Displays no proline racemase activity. The polypeptide is 4-hydroxyproline 2-epimerase 2 (Brucella anthropi (strain ATCC 49188 / DSM 6882 / CCUG 24695 / JCM 21032 / LMG 3331 / NBRC 15819 / NCTC 12168 / Alc 37) (Ochrobactrum anthropi)).